The following is a 1091-amino-acid chain: Protein JSN1 (1091 aa).

Disordered regions lie at residues 31–51 and 75–131; these read EYEN…KLGS and HHSK…GSLT. Residues 99–111 show a composition bias toward polar residues; sequence TVASKTPRASPSR. Ser129 is modified (phosphoserine). Phosphothreonine is present on Thr131. Phosphoserine occurs at positions 160 and 168. The region spanning 340–426 is the RRM domain; sequence NTISISNVFP…APSKISFAKI (87 aa). Low complexity-rich tracts occupy residues 482–494 and 507–520; these read QQSQ…NHSS and NNNN…NNSA. Disordered stretches follow at residues 482–534 and 568–591; these read QQSQ…PPPN and HKGT…EFDP. Residues 557-913 enclose the PUM-HD domain; sequence QINSLIKKSL…RLLEEVGLAS (357 aa). Residues 568–577 are compositionally biased toward polar residues; sequence HKGTSDTQNF. Pumilio repeat units lie at residues 617–652, 653–689, 690–724, 725–760, and 801–837; these read AMLD…IMLR, KTSK…QVTQ, GVKD…FIFE, SIIA…QSIV, and RLTK…IILD. The disordered stretch occupies residues 911–981; that stretch reads LASPSSTHNK…GSSASTLSPG (71 aa). Ser913 bears the Phosphoserine mark. Low complexity-rich tracts occupy residues 915–935 and 951–979; these read SSTH…SISH and SVSS…STLS.

This is Protein JSN1 (JSN1) from Saccharomyces cerevisiae (strain ATCC 204508 / S288c) (Baker's yeast).